The sequence spans 193 residues: dCTP deaminase (193 aa).

Residues 110–115 (RSSLAR), D128, 136–138 (VLE), Y171, K178, and Q182 each bind dCTP. E138 serves as the catalytic Proton donor/acceptor. Residues 173-193 (KRKNAKYKDQQDAVASRISQD) are disordered.

Belongs to the dCTP deaminase family. In terms of assembly, homotrimer.

It catalyses the reaction dCTP + H2O + H(+) = dUTP + NH4(+). It functions in the pathway pyrimidine metabolism; dUMP biosynthesis; dUMP from dCTP (dUTP route): step 1/2. In terms of biological role, catalyzes the deamination of dCTP to dUTP. This is dCTP deaminase from Shewanella sp. (strain ANA-3).